A 394-amino-acid polypeptide reads, in one-letter code: Argininosuccinate synthase (394 aa).

Residues 7-15 (AYSGGLDTS) and alanine 35 contribute to the ATP site. Tyrosine 85 contributes to the L-citrulline binding site. Glycine 115 is a binding site for ATP. L-aspartate contacts are provided by threonine 117, asparagine 121, and aspartate 122. Asparagine 121 is an L-citrulline binding site. The L-citrulline site is built by arginine 125, serine 174, serine 183, glutamate 258, and tyrosine 270.

This sequence belongs to the argininosuccinate synthase family. Type 1 subfamily. In terms of assembly, homotetramer.

Its subcellular location is the cytoplasm. The enzyme catalyses L-citrulline + L-aspartate + ATP = 2-(N(omega)-L-arginino)succinate + AMP + diphosphate + H(+). The protein operates within amino-acid biosynthesis; L-arginine biosynthesis; L-arginine from L-ornithine and carbamoyl phosphate: step 2/3. The sequence is that of Argininosuccinate synthase from Methanopyrus kandleri (strain AV19 / DSM 6324 / JCM 9639 / NBRC 100938).